A 122-amino-acid chain; its full sequence is T-cell receptor beta chain V region C5 (122 aa).

Positions 1-7 (ILLCAKH) are cleaved as a signal peptide. Residues 8-103 (MEAAVTQSPR…TAVYFCASSG (96 aa)) are v segment. The cysteines at positions 31 and 99 are disulfide-linked. The segment at 104–108 (TGGAL) is d segment. The segment at 109–122 (DTQYFGPGTRLLVL) is j segment.

This Mus musculus (Mouse) protein is T-cell receptor beta chain V region C5.